The following is a 473-amino-acid chain: ATP synthase subunit beta (473 aa).

Residue 153–160 (GGAGVGKT) coordinates ATP.

The protein belongs to the ATPase alpha/beta chains family. F-type ATPases have 2 components, CF(1) - the catalytic core - and CF(0) - the membrane proton channel. CF(1) has five subunits: alpha(3), beta(3), gamma(1), delta(1), epsilon(1). CF(0) has three main subunits: a(1), b(2) and c(9-12). The alpha and beta chains form an alternating ring which encloses part of the gamma chain. CF(1) is attached to CF(0) by a central stalk formed by the gamma and epsilon chains, while a peripheral stalk is formed by the delta and b chains.

The protein resides in the cell inner membrane. It carries out the reaction ATP + H2O + 4 H(+)(in) = ADP + phosphate + 5 H(+)(out). Functionally, produces ATP from ADP in the presence of a proton gradient across the membrane. The catalytic sites are hosted primarily by the beta subunits. This Rickettsia bellii (strain OSU 85-389) protein is ATP synthase subunit beta.